The chain runs to 441 residues: N-succinylarginine dihydrolase (441 aa).

Residues 19–28 (AGLSFGNEAS), N110, and 137–138 (HR) contribute to the substrate site. The active site involves E174. R212 lines the substrate pocket. Residue H248 is part of the active site. Residues D250 and N359 each coordinate substrate. Residue C365 is the Nucleophile of the active site.

Belongs to the succinylarginine dihydrolase family. In terms of assembly, homodimer.

The catalysed reaction is N(2)-succinyl-L-arginine + 2 H2O + 2 H(+) = N(2)-succinyl-L-ornithine + 2 NH4(+) + CO2. It functions in the pathway amino-acid degradation; L-arginine degradation via AST pathway; L-glutamate and succinate from L-arginine: step 2/5. Its function is as follows. Catalyzes the hydrolysis of N(2)-succinylarginine into N(2)-succinylornithine, ammonia and CO(2). The sequence is that of N-succinylarginine dihydrolase from Cronobacter sakazakii (strain ATCC BAA-894) (Enterobacter sakazakii).